The chain runs to 173 residues: NADH-quinone oxidoreductase subunit B 1 (173 aa).

[4Fe-4S] cluster-binding residues include Cys42, Cys43, Cys107, and Cys137.

It belongs to the complex I 20 kDa subunit family. As to quaternary structure, NDH-1 is composed of 14 different subunits. Subunits NuoB, C, D, E, F, and G constitute the peripheral sector of the complex. [4Fe-4S] cluster serves as cofactor.

Its subcellular location is the cell inner membrane. It catalyses the reaction a quinone + NADH + 5 H(+)(in) = a quinol + NAD(+) + 4 H(+)(out). In terms of biological role, NDH-1 shuttles electrons from NADH, via FMN and iron-sulfur (Fe-S) centers, to quinones in the respiratory chain. The immediate electron acceptor for the enzyme in this species is believed to be ubiquinone. Couples the redox reaction to proton translocation (for every two electrons transferred, four hydrogen ions are translocated across the cytoplasmic membrane), and thus conserves the redox energy in a proton gradient. This chain is NADH-quinone oxidoreductase subunit B 1, found in Anaeromyxobacter sp. (strain K).